Consider the following 381-residue polypeptide: Acetylornithine deacetylase (381 aa).

A Zn(2+)-binding site is contributed by H78. D80 is a catalytic residue. D110 is a binding site for Zn(2+). Residue E142 is part of the active site. 3 residues coordinate Zn(2+): E143, E167, and H353.

This sequence belongs to the peptidase M20A family. ArgE subfamily. Homodimer. It depends on Zn(2+) as a cofactor. Co(2+) is required as a cofactor. Glutathione serves as cofactor.

It is found in the cytoplasm. It catalyses the reaction N(2)-acetyl-L-ornithine + H2O = L-ornithine + acetate. Its pathway is amino-acid biosynthesis; L-arginine biosynthesis; L-ornithine from N(2)-acetyl-L-ornithine (linear): step 1/1. Functionally, catalyzes the hydrolysis of the amide bond of N(2)-acetylated L-amino acids. Cleaves the acetyl group from N-acetyl-L-ornithine to form L-ornithine, an intermediate in L-arginine biosynthesis pathway, and a branchpoint in the synthesis of polyamines. The protein is Acetylornithine deacetylase of Moritella profunda.